Here is a 453-residue protein sequence, read N- to C-terminus: Probable glucan endo-1,3-beta-glucosidase eglC (453 aa).

The first 18 residues, 1-18 (MQTRQLLALALAVAATEA), serve as a signal peptide directing secretion. Residue Glu-128 is the Proton donor of the active site. Residue Asn-183 is glycosylated (N-linked (GlcNAc...) asparagine). Catalysis depends on Glu-239, which acts as the Nucleophile. N-linked (GlcNAc...) asparagine glycans are attached at residues Asn-364, Asn-368, and Asn-376. The span at 370-380 (TYPGSWNSTRP) shows a compositional bias: polar residues. A disordered region spans residues 370–423 (TYPGSWNSTRPGANGGSSGSSGSSGSSGSSGSSGSSGSGASGHSSSTGSSSFPS). 2 stretches are compositionally biased toward low complexity: residues 389 to 402 (SSGS…SGSS) and 410 to 423 (SGHS…SFPS). A lipid anchor (GPI-anchor amidated asparagine) is attached at Asn-430. The propeptide at 431-453 (SASGLSGSLFGAVAAVFVALAAL) is removed in mature form.

It belongs to the glycosyl hydrolase 17 family. The GPI-anchor is attached to the protein in the endoplasmic reticulum and serves to target the protein to the cell surface. There, the glucosamine-inositol phospholipid moiety is cleaved off and the GPI-modified mannoprotein is covalently attached via its lipidless GPI glycan remnant to the 1,6-beta-glucan of the outer cell wall layer.

The protein localises to the cell membrane. It localises to the secreted. The protein resides in the cell wall. It carries out the reaction Hydrolysis of (1-&gt;3)-beta-D-glucosidic linkages in (1-&gt;3)-beta-D-glucans.. Functionally, glucanases play a role in cell expansion during growth, in cell-cell fusion during mating, and in spore release during sporulation. This enzyme may be involved in beta-glucan degradation and also function biosynthetically as a transglycosylase. The sequence is that of Probable glucan endo-1,3-beta-glucosidase eglC (eglC) from Aspergillus clavatus (strain ATCC 1007 / CBS 513.65 / DSM 816 / NCTC 3887 / NRRL 1 / QM 1276 / 107).